A 483-amino-acid polypeptide reads, in one-letter code: MAEFTPITIAYGDGIGPEIMEAVLYILRKAEARIRLETIEVGEKLYKKHYTSGISEESWESIQRTGIILKAPITTPQGGGYKSLNVTIRKTLQLFANIRPAVSLHPFTRTLHPNLNLTIIRENEEDLYAGIEYRQTHNMYESMKLISHTGCEKIIRYAFEYAVKNNRKKVMCLSKDNIMKFSDGVLHKVFNEIAKEYPQINNAHYIIDIGTARLATKPEIFDVIVTSNLYGDIISDVAAEISGSVGLAGSANIGQHYAMFEAVHGSAPDIAGKDIANPSGLLNAAIMMLVHIGQGDIATLIENAWKKTIEDGVHTADIYNEQSSSKKVGTKEFAEEVTKRLGQLPTKLPKADYPLIAEKQESNIDYKIDTKEVKKLVGTDIFVNMNVSSAHDIADKINKLDLGNFELKTISSKGLKLWPRDTRFETVSDHWCCRFMNKDGTEIKHLDITRLLEALSTANIDFIKVENLFEFDGVAGYSLAQGE.

T74 is an NADP(+) binding site. Residues S83, N85, R89, R99, and R121 each contribute to the D-threo-isocitrate site. D232 provides a ligand contact to Mg(2+). Residues 264-270 and N277 contribute to the NADP(+) site; that span reads HGSAPDI.

This sequence belongs to the isocitrate and isopropylmalate dehydrogenases family. In terms of assembly, homodimer. Mg(2+) serves as cofactor. Requires Mn(2+) as cofactor.

The catalysed reaction is D-threo-isocitrate + NADP(+) = 2-oxoglutarate + CO2 + NADPH. Catalyzes the oxidative decarboxylation of isocitrate to 2-oxoglutarate and carbon dioxide with the concomitant reduction of NADP(+). The protein is Isocitrate dehydrogenase [NADP] (icd) of Rickettsia conorii (strain ATCC VR-613 / Malish 7).